The following is a 263-amino-acid chain: Aminoglycoside 3'-phosphotransferase (263 aa).

Asp-183 serves as the catalytic Proton acceptor.

The protein belongs to the aminoglycoside phosphotransferase family.

It carries out the reaction kanamycin A + ATP = kanamycin 3'-phosphate + ADP + H(+). Resistance to kanamycin and structurally-related aminoglycosides, including amikacin. The chain is Aminoglycoside 3'-phosphotransferase (rph) from Streptomyces ribosidificus.